We begin with the raw amino-acid sequence, 209 residues long: MTKGILGRKVGMTQIFTKNGILVPVTVIEATPNVVLQVKTNESDGYEAVQVGYQDMREVLSNKPAKGHAAKAKTSPKRFIREIRDVELKDYEVGSEITVDSFSEGDVVDVTGTTRGHGTQGNIKRWGQSRGPETHGSRYHRIPGSMGSIINRVPKGKKLPGHMGGKKVTVQNLVIEKVVPEKNVLLIKGNVPGAKNSLIFVKSAAKAAK.

The segment covering 112–122 (GTTRGHGTQGN) has biased composition (polar residues). The segment at 112–146 (GTTRGHGTQGNIKRWGQSRGPETHGSRYHRIPGSM) is disordered.

This sequence belongs to the universal ribosomal protein uL3 family. In terms of assembly, part of the 50S ribosomal subunit. Forms a cluster with proteins L14 and L19.

In terms of biological role, one of the primary rRNA binding proteins, it binds directly near the 3'-end of the 23S rRNA, where it nucleates assembly of the 50S subunit. The sequence is that of Large ribosomal subunit protein uL3 from Lactobacillus johnsonii (strain CNCM I-12250 / La1 / NCC 533).